The primary structure comprises 155 residues: Protein-export protein SecB (155 aa).

This sequence belongs to the SecB family. As to quaternary structure, homotetramer, a dimer of dimers. One homotetramer interacts with 1 SecA dimer.

Its subcellular location is the cytoplasm. Functionally, one of the proteins required for the normal export of preproteins out of the cell cytoplasm. It is a molecular chaperone that binds to a subset of precursor proteins, maintaining them in a translocation-competent state. It also specifically binds to its receptor SecA. In Salmonella heidelberg (strain SL476), this protein is Protein-export protein SecB.